Consider the following 342-residue polypeptide: Anthranilate phosphoribosyltransferase (342 aa).

Residues Gly-84, 87–88, Thr-92, 94–97, 112–120, and Ser-124 contribute to the 5-phospho-alpha-D-ribose 1-diphosphate site; these read GD, NITT, and KHGNRSVSS. An anthranilate-binding site is contributed by Gly-84. Residue Thr-96 coordinates Mg(2+). Position 115 (Asn-115) interacts with anthranilate. Arg-170 serves as a coordination point for anthranilate. 2 residues coordinate Mg(2+): Asp-228 and Glu-229.

Belongs to the anthranilate phosphoribosyltransferase family. Homodimer. The cofactor is Mg(2+).

It catalyses the reaction N-(5-phospho-beta-D-ribosyl)anthranilate + diphosphate = 5-phospho-alpha-D-ribose 1-diphosphate + anthranilate. It participates in amino-acid biosynthesis; L-tryptophan biosynthesis; L-tryptophan from chorismate: step 2/5. Functionally, catalyzes the transfer of the phosphoribosyl group of 5-phosphorylribose-1-pyrophosphate (PRPP) to anthranilate to yield N-(5'-phosphoribosyl)-anthranilate (PRA). In Corynebacterium efficiens (strain DSM 44549 / YS-314 / AJ 12310 / JCM 11189 / NBRC 100395), this protein is Anthranilate phosphoribosyltransferase.